A 273-amino-acid chain; its full sequence is Dermonecrotic toxin LarSicTox-alphaIB1b (273 aa).

His5 is a catalytic residue. Positions 25 and 27 each coordinate Mg(2+). His41 functions as the Nucleophile in the catalytic mechanism. 2 cysteine pairs are disulfide-bonded: Cys45-Cys51 and Cys47-Cys190. Asp85 serves as a coordination point for Mg(2+). A glycan (N-linked (GlcNAc...) asparagine) is linked at Asn250.

It belongs to the arthropod phospholipase D family. Class II subfamily. It depends on Mg(2+) as a cofactor. As to expression, expressed by the venom gland.

The protein resides in the secreted. It carries out the reaction an N-(acyl)-sphingosylphosphocholine = an N-(acyl)-sphingosyl-1,3-cyclic phosphate + choline. The catalysed reaction is an N-(acyl)-sphingosylphosphoethanolamine = an N-(acyl)-sphingosyl-1,3-cyclic phosphate + ethanolamine. The enzyme catalyses a 1-acyl-sn-glycero-3-phosphocholine = a 1-acyl-sn-glycero-2,3-cyclic phosphate + choline. It catalyses the reaction a 1-acyl-sn-glycero-3-phosphoethanolamine = a 1-acyl-sn-glycero-2,3-cyclic phosphate + ethanolamine. Functionally, dermonecrotic toxins cleave the phosphodiester linkage between the phosphate and headgroup of certain phospholipids (sphingolipid and lysolipid substrates), forming an alcohol (often choline) and a cyclic phosphate. This toxin acts on sphingomyelin (SM). It may also act on ceramide phosphoethanolamine (CPE), lysophosphatidylcholine (LPC) and lysophosphatidylethanolamine (LPE), but not on lysophosphatidylserine (LPS), and lysophosphatidylglycerol (LPG). It acts by transphosphatidylation, releasing exclusively cyclic phosphate products as second products. Induces dermonecrosis, hemolysis, increased vascular permeability, edema, inflammatory response, and platelet aggregation. The chain is Dermonecrotic toxin LarSicTox-alphaIB1b from Loxosceles arizonica (Arizona brown spider).